Reading from the N-terminus, the 951-residue chain is Valine--tRNA ligase (951 aa).

A 'HIGH' region motif is present at residues proline 42 to histidine 52. Positions lysine 554–serine 558 match the 'KMSKS' region motif. Lysine 557 serves as a coordination point for ATP. Residues alanine 880–glutamine 944 are a coiled coil.

It belongs to the class-I aminoacyl-tRNA synthetase family. ValS type 1 subfamily. In terms of assembly, monomer.

It is found in the cytoplasm. The catalysed reaction is tRNA(Val) + L-valine + ATP = L-valyl-tRNA(Val) + AMP + diphosphate. Functionally, catalyzes the attachment of valine to tRNA(Val). As ValRS can inadvertently accommodate and process structurally similar amino acids such as threonine, to avoid such errors, it has a 'posttransfer' editing activity that hydrolyzes mischarged Thr-tRNA(Val) in a tRNA-dependent manner. This chain is Valine--tRNA ligase, found in Shigella boydii serotype 4 (strain Sb227).